The sequence spans 556 residues: Melanoma-associated antigen B4 (556 aa).

Over residues 1 to 15 (MPRGQKSKARAREKR) the composition is skewed to basic residues. The tract at residues 1–110 (MPRGQKSKAR…RFSENPQNDL (110 aa)) is disordered. The segment covering 39–73 (PSCSNQDSGDAVASTSTAGFPQKSKSQGEAPTTTA) has biased composition (polar residues). Positions 77 to 87 (GACRRSRKSTR) are enriched in basic residues. Positions 111-310 (LTRKTGMLMQ…QAFPTHYEEA (200 aa)) constitute an MAGE domain. The disordered stretch occupies residues 315-335 (EERAQAEAVGSPGTSAKDKAE). Residue S325 is modified to Phosphoserine. 15 consecutive repeat copies span residues 334–348 (AEAKVTLVDSSCKYQ), 349–363 (AESKVTLVDSSCKDQ), 364–378 (AESKVTLVDPSCKDN), 379–392 (AKSKVTLGSSRKYK), 393–407 (AKSKVPLVDSSCKDQ), 408–421 (AESKVTLVDSCKDQ), 422–436 (AESKVTLVDSSCKDQ), 437–451 (AESKVTLVDSSCKDQ), 452–466 (AESKVTLVDPSCKDK), 467–480 (AKSKVTLGSSHKYK), 481–495 (AKSKVTLVDSSCKDQ), 496–510 (AESKVTLVDSSCKDQ), 511–525 (AESKVTLVDPSCKDN), 526–539 (AKSKVTLGSSRKYK), and 540–554 (AKSKVPLVDSSGKDK). The tract at residues 334 to 554 (AEAKVTLVDS…PLVDSSGKDK (221 aa)) is 15 X 15 AA approximate tandem repeats.

Expressed in testis (at protein level).

Its subcellular location is the cytoplasm. The polypeptide is Melanoma-associated antigen B4 (Mus musculus (Mouse)).